Reading from the N-terminus, the 68-residue chain is U1-agatoxin-Ta1c (68 aa).

A signal peptide spans Met1–Cys17. Disulfide bonds link Cys23–Cys53, Cys39–Cys49, and Cys42–Cys62. At Lys67 the chain carries Lysine amide.

It belongs to the helical arthropod-neuropeptide-derived (HAND) family. Expressed by the venom gland.

It localises to the secreted. Functionally, toxin that paralyzes insects. May have a direct effect on the insect central nervous system. This chain is U1-agatoxin-Ta1c, found in Eratigena agrestis (Hobo spider).